Here is a 66-residue protein sequence, read N- to C-terminus: Large ribosomal subunit protein bL35 (66 aa).

This sequence belongs to the bacterial ribosomal protein bL35 family.

The sequence is that of Large ribosomal subunit protein bL35 from Jannaschia sp. (strain CCS1).